The sequence spans 142 residues: MKIIIKNKDAFFNYEILEKYKAGLILKGWEVKSIRENKVQLKGAFITFKNDEAYITNMHISQYMSVKGNELEPRKLLLNKHEIRHIQDKKNRNSLAVIPLNLFWDNNYIKLEIALAKGKTKADKRHRILEKDVRKHLKKITY.

This sequence belongs to the SmpB family.

It is found in the cytoplasm. Functionally, required for rescue of stalled ribosomes mediated by trans-translation. Binds to transfer-messenger RNA (tmRNA), required for stable association of tmRNA with ribosomes. tmRNA and SmpB together mimic tRNA shape, replacing the anticodon stem-loop with SmpB. tmRNA is encoded by the ssrA gene; the 2 termini fold to resemble tRNA(Ala) and it encodes a 'tag peptide', a short internal open reading frame. During trans-translation Ala-aminoacylated tmRNA acts like a tRNA, entering the A-site of stalled ribosomes, displacing the stalled mRNA. The ribosome then switches to translate the ORF on the tmRNA; the nascent peptide is terminated with the 'tag peptide' encoded by the tmRNA and targeted for degradation. The ribosome is freed to recommence translation, which seems to be the essential function of trans-translation. This is SsrA-binding protein from Mycoplasma mobile (strain ATCC 43663 / 163K / NCTC 11711) (Mesomycoplasma mobile).